The sequence spans 259 residues: Thiazole synthase (259 aa).

Lysine 99 functions as the Schiff-base intermediate with DXP in the catalytic mechanism. 1-deoxy-D-xylulose 5-phosphate-binding positions include glycine 160, 186–187, and 208–209; these read AG and NT.

It belongs to the ThiG family. Homotetramer. Forms heterodimers with either ThiH or ThiS.

It localises to the cytoplasm. The enzyme catalyses [ThiS sulfur-carrier protein]-C-terminal-Gly-aminoethanethioate + 2-iminoacetate + 1-deoxy-D-xylulose 5-phosphate = [ThiS sulfur-carrier protein]-C-terminal Gly-Gly + 2-[(2R,5Z)-2-carboxy-4-methylthiazol-5(2H)-ylidene]ethyl phosphate + 2 H2O + H(+). It participates in cofactor biosynthesis; thiamine diphosphate biosynthesis. Functionally, catalyzes the rearrangement of 1-deoxy-D-xylulose 5-phosphate (DXP) to produce the thiazole phosphate moiety of thiamine. Sulfur is provided by the thiocarboxylate moiety of the carrier protein ThiS. In vitro, sulfur can be provided by H(2)S. This Porphyromonas gingivalis (strain ATCC 33277 / DSM 20709 / CIP 103683 / JCM 12257 / NCTC 11834 / 2561) protein is Thiazole synthase.